The sequence spans 489 residues: Cryptochrome DASH (489 aa).

One can recognise a Photolyase/cryptochrome alpha/beta domain in the interval 6–140 (PTVLVWFRND…EAKGYWGSTL (135 aa)).

Belongs to the DNA photolyase class-1 family. FAD is required as a cofactor. It depends on (6R)-5,10-methylene-5,6,7,8-tetrahydrofolate as a cofactor.

May have a photoreceptor function. Binds DNA; represses transcription of at least 8 genes, including slr0364 and slr1866. Does not encode a DNA photolyase function. Its disruption does not affect circadian rhythm. This is Cryptochrome DASH (cry) from Synechocystis sp. (strain ATCC 27184 / PCC 6803 / Kazusa).